We begin with the raw amino-acid sequence, 298 residues long: Elongation factor Ts (298 aa).

The tract at residues 79–82 (TDFV) is involved in Mg(2+) ion dislocation from EF-Tu.

The protein belongs to the EF-Ts family.

The protein localises to the cytoplasm. Its function is as follows. Associates with the EF-Tu.GDP complex and induces the exchange of GDP to GTP. It remains bound to the aminoacyl-tRNA.EF-Tu.GTP complex up to the GTP hydrolysis stage on the ribosome. In Mycoplasma genitalium (strain ATCC 33530 / DSM 19775 / NCTC 10195 / G37) (Mycoplasmoides genitalium), this protein is Elongation factor Ts (tsf).